Consider the following 155-residue polypeptide: RNA pyrophosphohydrolase (155 aa).

In terms of domain architecture, Nudix hydrolase spans 5–149 (EYRSGVGIML…KKPLYEKILS (145 aa)). The Nudix box motif lies at 39–60 (GGLEAKETPEVGVLRELEEETG).

This sequence belongs to the Nudix hydrolase family. RppH subfamily. A divalent metal cation is required as a cofactor.

Functionally, accelerates the degradation of transcripts by removing pyrophosphate from the 5'-end of triphosphorylated RNA, leading to a more labile monophosphorylated state that can stimulate subsequent ribonuclease cleavage. In Zymomonas mobilis subsp. mobilis (strain ATCC 31821 / ZM4 / CP4), this protein is RNA pyrophosphohydrolase.